The primary structure comprises 255 residues: NADPH-dependent FMN reductase ArsH (255 aa).

43–50 (SLRARSFS) contributes to the FMN binding site.

The protein belongs to the ArsH family. Homotetramer. Requires FMN as cofactor.

Functionally, has NADPH-dependent FMN reductase activity and very low azoreductase activity. No activity with NADH. The protein is NADPH-dependent FMN reductase ArsH of Shigella flexneri.